Here is a 399-residue protein sequence, read N- to C-terminus: Leu/Ile/Val-binding protein homolog 7 (399 aa).

The first 22 residues, 1–22 (MEKHLIALSVAALLAGAAPASA), serve as a signal peptide directing secretion.

The protein belongs to the leucine-binding protein family.

In terms of biological role, component of an amino-acid transport system. In Brucella suis biovar 1 (strain 1330), this protein is Leu/Ile/Val-binding protein homolog 7.